A 153-amino-acid chain; its full sequence is Putative nuclear shuttle protein (153 aa).

Belongs to the nanoviridae nuclear shuttle protein family.

It is found in the host nucleus. The protein localises to the host cytoplasm. Putative nuclear shuttle protein. The chain is Putative nuclear shuttle protein (DNA-N) from Cicer arietinum (Chickpea).